Here is a 66-residue protein sequence, read N- to C-terminus: Gas vesicle protein A (66 aa).

This sequence belongs to the gas vesicle GvpA family. As to quaternary structure, the gas vesicle shell is 2 nm thick and consists of a single layer of this protein. It forms helical ribs nearly perpendicular to the long axis of the vesicle.

Its subcellular location is the gas vesicle shell. Functionally, gas vesicles are hollow, gas filled proteinaceous nanostructures found in some microorganisms. During planktonic growth they allow positioning of the organism at a favorable depth for light or nutrient acquisition. GvpA forms the protein shell. In Thiocapsa pendens (Amoebobacter pendens), this protein is Gas vesicle protein A.